The sequence spans 390 residues: Guanidine hydrolase (390 aa).

Ni(2+) contacts are provided by histidine 174, aspartate 199, histidine 201, aspartate 203, aspartate 291, and aspartate 293.

It belongs to the arginase family. Homohexamer. It depends on Ni(2+) as a cofactor.

It localises to the cytoplasm. It catalyses the reaction guanidine + H2O = urea + NH4(+). With respect to regulation, activation of GdmH depends on the presence of the accessory proteins GhaA (Sll1078) and GhaB (Sll1079), which load nickel into the active site. Hydrolase activity is slightly activated in the presence of GTP. It does not require ATP or NAD(P)H. Addition of Ca(2+), Mn(2+), Fe(2+) or Fe(3+) has no consistent effects, whereas addition of Co(2+), Cu(2+) or Zn(2+) inhibits the activity. Its function is as follows. Catalyzes the hydrolysis of guanidine into urea and ammonium. Is highly specific for free guanidine. At pH 8, also catalyzes the release of urea from methylguanidine but with significantly reduced specific activity compared with that for guanidine. Cannot hydrolyze guanidinoacetate, guanidinopropionate, guanidinobutyrate, agmatine, arginine or creatine. Required to use guanidine as the sole nitrogen source for growth. Overexpression of the gene accelerates guanidine degradation and promotes biomass growth. This is Guanidine hydrolase from Synechocystis sp. (strain ATCC 27184 / PCC 6803 / Kazusa).